Here is a 125-residue protein sequence, read N- to C-terminus: Protein Turandot F (125 aa).

Residues 1–19 (MKTVILFGFLLALLGYLEA) form the signal peptide.

It belongs to the Turandot family.

Its subcellular location is the secreted. A humoral factor that may play a role in stress tolerance. The sequence is that of Protein Turandot F from Drosophila melanogaster (Fruit fly).